The chain runs to 144 residues: Prefoldin subunit alpha (144 aa).

Belongs to the prefoldin alpha subunit family. In terms of assembly, heterohexamer of two alpha and four beta subunits.

Its subcellular location is the cytoplasm. Functionally, molecular chaperone capable of stabilizing a range of proteins. Seems to fulfill an ATP-independent, HSP70-like function in archaeal de novo protein folding. This is Prefoldin subunit alpha from Methanococcus maripaludis (strain C5 / ATCC BAA-1333).